Consider the following 261-residue polypeptide: Putative hydro-lyase Nther_1142 (261 aa).

Belongs to the D-glutamate cyclase family.

In Natranaerobius thermophilus (strain ATCC BAA-1301 / DSM 18059 / JW/NM-WN-LF), this protein is Putative hydro-lyase Nther_1142.